A 1396-amino-acid chain; its full sequence is MAEVSVQRILLLVVSLAKCLEGTKLLAHLKKCGDLECETLISRVLALRDYTGPDCRYLNFTTGEEISVYVKLGGDREDLWAGSKGKDFGFFPRDAVEIEEVFISEEVEMPTKSDFLCLLGEGYIFGSEQSELNSEDDEEHMYPYEKDEDQNYNIYEGDFQPEPDLYAAAEGTLLEDQIPASEAPDDFRFSSEWKAWEGAGSQGGGEQDYTADSDQDLPSLSKPERQGWFGLGTEEAEEKVFESDTEPTQELALEEESDLEKLHSGEPQVELEQEPKSETLEFSSVPDEEYELESETESILKPQASGWFGEGLTSYLGFGNEEAGLELLSKESNPPLQDIPSSVPPDEEVPAPCREISTDKEDAVINDSSVLSPSWFYYGFGMLGFTNADEDNIVSDKGENEDGEVDNLKHPIGSDFDPEKEQERKIVTVETEDQAGTESVLEKTDESGSMQYLKKFFDNPWGFQSLPEDTELPFSKKMLDQDDIVENDKIEELSTENSPTGSMKDPVMLASRYVLSDIDSEVELPMEEHEGVHFKPSSSKRNEDDSNSWADPEELSVAQTDGSAEGALLDTQLVSPKEHAADFQLLKYLLQIDVYGFMSSALSPIEILLESVVAALPEDMRADFNPSGFSLELAVCVLSVGLLAVVLFLWRGFRSIRSRFYVGREKKLALELSALIEEKCKLLDKVSIVQKEYEGLESSLKEASFEKESTEAQSLEFVEGSQISEATYENLEQSKSKLEDEILLLEEKLEEERAKHSEQDELMADISKRIQSLEDESKSLKSQVAEAKTTFRIFEINEERLKGAIKDALNENSQLQESQKQLLQETEMMKEQVNDLDKQKVALEESRAQAEQALSEKESQIETLVTSLLKMKDWAAVLGEADDGNLDLDMKSGLENTAALDNQPKGALKKLIYAAKLNASLKALEGERNQVYTQLSEVDQVKEDLTEHIKSLESKQASLQSEKTEFESESQKLQQKLKVITELYQENEMKLHRKLTVEENYRLEKEEKLSKVDEKISHATEELETCRQRAKDLEEELERTIHSYQGQVISHEKKAHDNWLAARTLERNLNDLRKENAHNRQKLTETEFKFELLEKDPYALDVPNTAFGREHSPYGPSPLGRPPSETRAFLSPPTLLEGPLRLSPLLPGGGGRGSRGPENLLDHQMNTERGESSYDRLSDAPRAPSDRSLSPPWEQDRRMTAHPPPGQPYSDPALQRQDRFYPNSGRLSGPAELRSYNMPSLDKVDGPVPSEMESSGNGTKDNLGNSNVPDSPIPAECEAAGRGFFPPPFPPVRDPLFPVDPRSQFMRRGPSFPPPPPGSIYAAPRDYFPPRDFPGPPLPPFPGRTVYAPRGFPPYLPPRAGFFPPPPHPESRSELPPDLIPPSKEPAADPPETQEA.

Positions 1-22 are cleaved as a signal peptide; it reads MAEVSVQRILLLVVSLAKCLEG. The Lumenal segment spans residues 23–604; sequence TKLLAHLKKC…YGFMSSALSP (582 aa). In terms of domain architecture, SH3 spans 39 to 101; it reads TLISRVLALR…PRDAVEIEEV (63 aa). Residue Asn59 is glycosylated (N-linked (GlcNAc...) asparagine). Disordered regions lie at residues 197–288 and 331–361; these read EGAG…VPDE and ESNP…TDKE. A compositionally biased stretch (acidic residues) spans 243 to 258; that stretch reads SDTEPTQELALEEESD. An N-linked (GlcNAc...) asparagine glycan is attached at Asn366. Disordered stretches follow at residues 396 to 421 and 525 to 557; these read DKGE…PEKE and PMEE…ELSV. Residues 605 to 625 lie within the membrane without spanning it; the sequence is IEILLESVVAALPEDMRADFN. At 626–628 the chain is on the lumenal side; that stretch reads PSG. The helical transmembrane segment at 629-649 threads the bilayer; it reads FSLELAVCVLSVGLLAVVLFL. The Cytoplasmic portion of the chain corresponds to 650–1396; the sequence is WRGFRSIRSR…AADPPETQEA (747 aa). A mediates interaction with MIA3 region spans residues 651 to 1243; sequence RGFRSIRSRF…RSYNMPSLDK (593 aa). 2 coiled-coil regions span residues 693–867 and 914–1082; these read YEGL…LVTS and AAKL…NRQK. Residues 1103–1396 are disordered; it reads PNTAFGREHS…AADPPETQEA (294 aa). Residues 1105 to 1396 are proline-rich domain (PRD); probably mediates interaction with COPII coat subunits; sequence TAFGREHSPY…AADPPETQEA (292 aa). Positions 1135 to 1146 are enriched in low complexity; the sequence is LLEGPLRLSPLL. Residues 1165-1179 show a composition bias toward basic and acidic residues; sequence MNTERGESSYDRLSD. Residues 1252-1269 show a composition bias toward polar residues; sequence MESSGNGTKDNLGNSNVP. Pro residues-rich tracts occupy residues 1331–1342 and 1351–1368; these read RDFPGPPLPPFP and GFPP…PPPH.

This sequence belongs to the MIA/OTOR family. As to quaternary structure, interacts with MIA3. Interacts with the COPII coat subunits SEC23A, SEC23B and maybe SEC24C. Interacts with PREB; recruits PREB to endoplasmic reticulum exit sites. Interacts with APOB. Isoform 1 is expressed in liver (at protein level). Isoform 2 is highly expressed in liver and weakly in testis.

It localises to the endoplasmic reticulum membrane. Functionally, plays a role in the transport of cargos that are too large to fit into COPII-coated vesicles and require specific mechanisms to be incorporated into membrane-bound carriers and exported from the endoplasmic reticulum. Plays a role in the secretion of lipoproteins, pre-chylomicrons and pre-VLDLs, by participating in their export from the endoplasmic reticulum. Thereby, may play a role in cholesterol and triglyceride homeostasis. Required for collagen VII (COL7A1) secretion by loading COL7A1 into transport carriers and recruiting PREB/SEC12 at the endoplasmic reticulum exit sites. The polypeptide is Melanoma inhibitory activity protein 2 (Mus musculus (Mouse)).